A 351-amino-acid polypeptide reads, in one-letter code: DNA polymerase IV (351 aa).

The 182-residue stretch at 4-185 (IIHVDMDCFF…LPLAKIPGVG (182 aa)) folds into the UmuC domain. Residues D8 and D103 each coordinate Mg(2+). E104 is an active-site residue.

Belongs to the DNA polymerase type-Y family. In terms of assembly, monomer. Requires Mg(2+) as cofactor.

It localises to the cytoplasm. The catalysed reaction is DNA(n) + a 2'-deoxyribonucleoside 5'-triphosphate = DNA(n+1) + diphosphate. Poorly processive, error-prone DNA polymerase involved in untargeted mutagenesis. Copies undamaged DNA at stalled replication forks, which arise in vivo from mismatched or misaligned primer ends. These misaligned primers can be extended by PolIV. Exhibits no 3'-5' exonuclease (proofreading) activity. May be involved in translesional synthesis, in conjunction with the beta clamp from PolIII. The polypeptide is DNA polymerase IV (Shigella dysenteriae serotype 1 (strain Sd197)).